The primary structure comprises 327 residues: E3 ubiquitin-protein ligase ZNRF4 (327 aa).

Positions M1–A28 are cleaved as a signal peptide. Over Q29–P150 the chain is Lumenal. N31 is a glycosylation site (N-linked (GlcNAc...) asparagine). Residues V151–V171 form a helical membrane-spanning segment. Over L172–S327 the chain is Cytoplasmic. The segment at C209–K252 adopts an RING-type; atypical zinc-finger fold. Positions A256 to G265 are enriched in polar residues. The disordered stretch occupies residues A256 to P279.

Interacts with CANX. As to expression, expressed exclusively in spermatids (at protein level).

It is found in the endoplasmic reticulum membrane. It carries out the reaction S-ubiquitinyl-[E2 ubiquitin-conjugating enzyme]-L-cysteine + [acceptor protein]-L-lysine = [E2 ubiquitin-conjugating enzyme]-L-cysteine + N(6)-ubiquitinyl-[acceptor protein]-L-lysine.. It functions in the pathway protein modification; protein ubiquitination. E3 ubiquitin-protein ligase that acts as a negative regulator of NOD2 signaling by mediating ubiquitination and degradation of RIPK2. Also catalyzes ubiquitination and proteasomal degradation of CANX within the endoplasmic reticulum. Could have a role in spermatogenesis. In Mus musculus (Mouse), this protein is E3 ubiquitin-protein ligase ZNRF4.